The primary structure comprises 163 residues: MADLTLDYQLADGITKAPEENAVHSWVAATLDYLQENDKAVELTVRIAALEEAQQLNNEFRNKDYATNVLSFPFNSPVELPVTLLGDLVICQSVVEREAEEQQKSAIDHWTHMVIHGTLHLLGYDHIEDDEAEEMEQIERNILASLGISDPYQTADNMELNTQ.

3 residues coordinate Zn(2+): His116, His120, and His126.

The protein belongs to the endoribonuclease YbeY family. It depends on Zn(2+) as a cofactor.

The protein resides in the cytoplasm. Single strand-specific metallo-endoribonuclease involved in late-stage 70S ribosome quality control and in maturation of the 3' terminus of the 16S rRNA. This is Endoribonuclease YbeY from Idiomarina loihiensis (strain ATCC BAA-735 / DSM 15497 / L2-TR).